We begin with the raw amino-acid sequence, 268 residues long: Orotidine 5'-phosphate decarboxylase (268 aa).

Residues Asp-37, 59-61 (KTH), 91-100 (DRKFADIGNT), Tyr-217, and Arg-235 each bind substrate. Residue Lys-93 is the Proton donor of the active site.

This sequence belongs to the OMP decarboxylase family.

The catalysed reaction is orotidine 5'-phosphate + H(+) = UMP + CO2. It functions in the pathway pyrimidine metabolism; UMP biosynthesis via de novo pathway; UMP from orotate: step 2/2. The protein is Orotidine 5'-phosphate decarboxylase (URA4) of Maudiozyma exigua (Yeast).